Reading from the N-terminus, the 66-residue chain is LYR motif-containing protein PHYPADRAFT_186863 (66 aa).

This sequence belongs to the complex I LYR family. LYRM9 subfamily.

The protein is LYR motif-containing protein PHYPADRAFT_186863 of Physcomitrium patens (Spreading-leaved earth moss).